The chain runs to 266 residues: Vitamin B12-binding protein (266 aa).

The first 22 residues, 1–22 (MAKQMFRALGALLLTLPVWLYA), serve as a signal peptide directing secretion. The Fe/B12 periplasmic-binding domain occupies 25-266 (RVITLSPANT…QLCNALSQVN (242 aa)). Residues Y50 and 242–246 (DWFER) contribute to the cyanocob(III)alamin site. Residues C183 and C259 are joined by a disulfide bond.

It belongs to the BtuF family. The complex is composed of two ATP-binding proteins (BtuD), two transmembrane proteins (BtuC) and a solute-binding protein (BtuF).

It is found in the periplasm. In terms of biological role, part of the ABC transporter complex BtuCDF involved in vitamin B12 import. Binds vitamin B12 and delivers it to the periplasmic surface of BtuC. This chain is Vitamin B12-binding protein, found in Salmonella typhi.